A 67-amino-acid chain; its full sequence is Tachystatin-A2 (67 aa).

Residues 1–23 form the signal peptide; it reads MKLQNTLILIGCLFLMGAMIGDA. Cystine bridges form between C27–C47, C34–C52, and C46–C64.

Granular hemocytes, small secretory granules.

The protein resides in the secreted. Its function is as follows. Exhibits stronger antimicrobial activity against the Gram-positive bacteria (S.aureus (IC(50)=4.2 ug/ml)) and fungi (C.albicans (IC(50)=3.0 ug/ml) and P.pastoris (IC(50)=0.5 ug/ml)) than Gram-negative bacteria (E.coli (IC(50)=25 ug/ml)). Binds to chitin (8.4 uM are required to obtain 50% of binding). Does not cause hemolysis on sheep erythrocytes. Has no blocking activity on the P-type calcium channel. Has also been shown to weakly inhibit Kv1.2/KCNA2 voltage-gated potassium channels and TRPV1 receptors. This chain is Tachystatin-A2, found in Tachypleus tridentatus (Japanese horseshoe crab).